The primary structure comprises 274 residues: Karrikin insensitive 2 receptor IA (274 aa).

Serine 95 (nucleophile) is an active-site residue. Active-site residues include aspartate 217 and histidine 246.

This sequence belongs to the AB hydrolase superfamily. As to quaternary structure, interacts with MAX2A and MAX2B in the presence of (-)-germacrene D, thus forming an E3 SCF ubiquitin ligase complex (ASK-cullin-F-box) containing MAX2A or MAX2B and KAI2IA recognizing SMAX1A; this leads to the subsequent degradation of the transcriptional corepressor SMAX1A, thus triggering the activation of a downstream signaling cascade. As to expression, strongly expressed in stigma.

Its subcellular location is the nucleus. It localises to the cytoplasm. Hydrolysis activity toward yoshimulactone green (YLG), a fluorescent agonist to strigolactone receptor, is inhibited by (-)-germacrene D and GR24, a synthetic strigolactone analog. Hydrolase involved in the olfaction of sesquiterpene volatile organic compounds (VOCs) during volatile plant communication in a MAX2 proteins-dependent manner. Acts as a karrikin-insensitive receptor that stereospecifically perceives and binds to (-)-germacrene D, particularly in stigmas, and triggers a signaling cascade influencing plant fitness, as the result of reproductive organ growth-promoting effect; this process involves an interaction with MAX2 proteins (e.g. MAX2A and MAX2B) and the subsequent degradation of SMAX1a, a transcriptional corepressor. The polypeptide is Karrikin insensitive 2 receptor IA (Petunia hybrida (Petunia)).